The sequence spans 345 residues: Heat-inducible transcription repressor HrcA (345 aa).

Belongs to the HrcA family.

Negative regulator of class I heat shock genes (grpE-dnaK-dnaJ and groELS operons). Prevents heat-shock induction of these operons. In Corynebacterium diphtheriae (strain ATCC 700971 / NCTC 13129 / Biotype gravis), this protein is Heat-inducible transcription repressor HrcA.